The sequence spans 106 residues: Ribonuclease P protein component 4 (106 aa).

Zn(2+) contacts are provided by Cys62, Cys65, Cys88, and Cys91.

The protein belongs to the eukaryotic/archaeal RNase P protein component 4 family. Consists of a catalytic RNA component and at least 4-5 protein subunits. Zn(2+) is required as a cofactor.

It is found in the cytoplasm. The catalysed reaction is Endonucleolytic cleavage of RNA, removing 5'-extranucleotides from tRNA precursor.. Functionally, part of ribonuclease P, a protein complex that generates mature tRNA molecules by cleaving their 5'-ends. This chain is Ribonuclease P protein component 4, found in Methanocorpusculum labreanum (strain ATCC 43576 / DSM 4855 / Z).